We begin with the raw amino-acid sequence, 238 residues long: Ribosomal RNA small subunit methyltransferase G (238 aa).

S-adenosyl-L-methionine is bound by residues Gly-77, Phe-82, 128–129 (AE), and Arg-147.

Belongs to the methyltransferase superfamily. RNA methyltransferase RsmG family.

It localises to the cytoplasm. Its function is as follows. Specifically methylates the N7 position of guanine in position 535 of 16S rRNA. This is Ribosomal RNA small subunit methyltransferase G from Brevibacillus brevis (strain 47 / JCM 6285 / NBRC 100599).